Here is a 372-residue protein sequence, read N- to C-terminus: Cyclin-dependent kinase 9 (372 aa).

One can recognise a Protein kinase domain in the interval 19–315 (YEKLAKIGQG…SDDALNHDFF (297 aa)). 25–33 (IGQGTFGEV) is a binding site for ATP. Lys44 is modified (N6-acetyllysine; by EP300/CBP, PCAF/KAT2B and GCN5/KAT2A). ATP contacts are provided by residues Lys48 and 104–106 (DFC). An N6-acetyllysine; by PCAF/KAT2B and GCN5/KAT2A modification is found at Lys48. The active-site Proton acceptor is the Asp149. Positions 166–191 (ADFGLARAFSLAKNSQPNRYTNRVVT) are T-loop. Asp167 is a binding site for ATP. Position 175 is a phosphoserine (Ser175). Thr186 carries the post-translational modification Phosphothreonine; by CaMK1D. Residues 343-372 (RRKGSQITQQSTNQSRNPATTNQTEFERVF) form a disordered region. Ser347 carries the phosphoserine; by CDK9 and PKA modification. The span at 347 to 366 (SQITQQSTNQSRNPATTNQT) shows a compositional bias: polar residues. Thr350 is subject to Phosphothreonine; by CDK9. A Phosphoserine; by CDK9 modification is found at Ser353. At Thr354 the chain carries Phosphothreonine; by CDK9. At Ser357 the chain carries Phosphoserine; by CDK9. 2 positions are modified to phosphothreonine; by CDK9: Thr362 and Thr363.

The protein belongs to the protein kinase superfamily. CMGC Ser/Thr protein kinase family. CDC2/CDKX subfamily. As to quaternary structure, component of the super elongation complex (SEC), at least composed of EAF1, EAF2, CDK9, MLLT3/AF9, AFF (AFF1 or AFF4), the P-TEFb complex and ELL (ELL, ELL2 or ELL3). Associates with CCNT1/cyclin-T1, CCNT2/cyclin-T2 (isoform A and isoform B) or CCNK/cyclin-K to form active P-TEFb. P-TEFb forms a complex with AFF4/AF5Q31 and is part of the super elongation complex (SEC). Component of a complex which is composed of at least 5 members: HTATSF1/Tat-SF1, P-TEFb complex, RNA pol II, SUPT5H, and NCL/nucleolin. Associates with UBR5 and forms a transcription regulatory complex composed of CDK9, RNAP II, UBR5 and TFIIS/TCEA1 that can stimulate target gene transcription (e.g. gamma fibrinogen/FGG) by recruiting their promoters. Component of the 7SK snRNP inactive complex which is composed of at least 8 members: P-TEFb (composed of CDK9 and CCNT1/cyclin-T1), HEXIM1, HEXIM2, LARP7, BCDIN3, SART3 proteins and 7SK and U6 snRNAs. This inactive 7SK snRNP complex can also interact with NCOR1 and HDAC3, probably to regulate CDK9 acetylation. Release of P-TEFb from P-TEFb/7SK snRNP complex requires both PP2B to transduce calcium Ca(2+) signaling in response to stimuli (e.g. UV or hexamethylene bisacetamide (HMBA)), and PPP1CA to dephosphorylate Thr-186. This released P-TEFb remains inactive in the pre-initiation complex with BRD4 until new Thr-186 phosphorylation occurs after the synthesis of a short RNA. Interacts with BRD4; to target chromatin binding. Interacts with JMJD6. Interacts with activated nuclear STAT3 and RELA/p65. Binds to AR and MYOD1. Forms a complex composed of CDK9, CCNT1/cyclin-T1, EP300 and GATA4 that stimulates hypertrophy in cardiomyocytes. The large PER complex involved in the repression of transcriptional termination is composed of at least PER2, CDK9, DDX5, DHX9, NCBP1 and POLR2A. Interacts with HSF1. Interacts with TBX21. Interacts with WDR43. Interacts with ZMYND8; the association appears to occur between homodimeric ZMYND8 and the activated form of the P-TEFb complex. In terms of processing, autophosphorylation at Thr-186, Ser-347, Thr-350, Ser-353, Thr-354 and Ser-357 triggers kinase activity by promoting cyclin and substrate binding upon conformational changes. Thr-186 phosphorylation requires the calcium Ca(2+) signaling pathway, including CaMK1D and calmodulin. This inhibition is relieved by Thr-29 dephosphorylation. Phosphorylation at Ser-175 inhibits kinase activity. Can be phosphorylated on either Thr-362 or Thr-363 but not on both simultaneously. Post-translationally, dephosphorylation of Thr-186 by PPM1A and PPM1B blocks CDK9 activity and may lead to CDK9 proteasomal degradation. However, PPP1CA-mediated Thr-186 dephosphorylation is required to release P-TEFb from its inactive P-TEFb/7SK snRNP complex. Dephosphorylated at Ser-347 by the PNUTS-PP1 complex during RNA polymerase II transcription pause-release. Dephosphorylation of C-terminus Thr and Ser residues by protein phosphatase-1 (PP1) triggers CDK9 activity. N6-acetylation of Lys-44 promotes kinase activity, whereas acetylation of both Lys-44 and Lys-48 mediated by PCAF/KAT2B and GCN5/KAT2A reduces kinase activity. The acetylated form associates with PML bodies in the nuclear matrix and with the transcriptionally silent HIV-1 genome; deacetylated upon transcription stimulation. Deacetylated by SIRT7, promoting the kinase activity and subsequent 'Ser-2' phosphorylation of the C-terminal domain (CTD) of RNA polymerase II. In terms of processing, polyubiquitinated and thus activated by UBR5. This ubiquitination is promoted by TFIIS/TCEA1 and favors 'Ser-2' phosphorylation of RPB1/POLR2A CTD.

It is found in the nucleus. The protein localises to the cytoplasm. Its subcellular location is the PML body. The catalysed reaction is L-seryl-[protein] + ATP = O-phospho-L-seryl-[protein] + ADP + H(+). It carries out the reaction L-threonyl-[protein] + ATP = O-phospho-L-threonyl-[protein] + ADP + H(+). It catalyses the reaction [DNA-directed RNA polymerase] + ATP = phospho-[DNA-directed RNA polymerase] + ADP + H(+). With respect to regulation, activation by Thr-186 phosphorylation is calcium Ca(2+) signaling pathway-dependent; actively inactivated by dephosphorylation mediated by PPP1CA, PPM1A and PPM1B. Reversibly repressed by acetylation at Lys-44 and Lys-48. Protein kinase involved in the regulation of transcription. Member of the cyclin-dependent kinase pair (CDK9/cyclin-T) complex, also called positive transcription elongation factor b (P-TEFb), which facilitates the transition from abortive to productive elongation by phosphorylating the CTD (C-terminal domain) of the large subunit of RNA polymerase II (RNAP II) POLR2A, SUPT5H and RDBP. This complex is inactive when in the 7SK snRNP complex form. Phosphorylates EP300, MYOD1, RPB1/POLR2A and AR and the negative elongation factors DSIF and NELFE. Regulates cytokine inducible transcription networks by facilitating promoter recognition of target transcription factors (e.g. TNF-inducible RELA/p65 activation and IL-6-inducible STAT3 signaling). Promotes RNA synthesis in genetic programs for cell growth, differentiation and viral pathogenesis. P-TEFb is also involved in cotranscriptional histone modification, mRNA processing and mRNA export. Modulates a complex network of chromatin modifications including histone H2B monoubiquitination (H2Bub1), H3 lysine 4 trimethylation (H3K4me3) and H3K36me3; integrates phosphorylation during transcription with chromatin modifications to control co-transcriptional histone mRNA processing. The CDK9/cyclin-K complex has also a kinase activity towards CTD of RNAP II and can substitute for CDK9/cyclin-T P-TEFb in vitro. Replication stress response protein; the CDK9/cyclin-K complex is required for genome integrity maintenance, by promoting cell cycle recovery from replication arrest and limiting single-stranded DNA amount in response to replication stress, thus reducing the breakdown of stalled replication forks and avoiding DNA damage. In addition, probable function in DNA repair of isoform 2 via interaction with KU70/XRCC6. Promotes cardiac myocyte enlargement. RPB1/POLR2A phosphorylation on 'Ser-2' in CTD activates transcription. AR phosphorylation modulates AR transcription factor promoter selectivity and cell growth. DSIF and NELF phosphorylation promotes transcription by inhibiting their negative effect. The phosphorylation of MYOD1 enhances its transcriptional activity and thus promotes muscle differentiation. Catalyzes phosphorylation of KAT5, promoting KAT5 recruitment to chromatin and histone acetyltransferase activity. The polypeptide is Cyclin-dependent kinase 9 (CDK9) (Bos taurus (Bovine)).